We begin with the raw amino-acid sequence, 98 residues long: MPLIHINIMMAFIMSLVGLLMYRSHLMSALLCLEGMMLSLFILTALLALDSHFILASMIPIILLVFAACEAAIGLALLVMISSTYGTDYVQNLNLLRC.

3 helical membrane-spanning segments follow: residues 1-21, 29-49, and 61-81; these read MPLIHINIMMAFIMSLVGLLM, ALLCLEGMMLSLFILTALLAL, and IILLVFAACEAAIGLALLVMI.

It belongs to the complex I subunit 4L family. As to quaternary structure, core subunit of respiratory chain NADH dehydrogenase (Complex I) which is composed of 45 different subunits.

It localises to the mitochondrion inner membrane. The enzyme catalyses a ubiquinone + NADH + 5 H(+)(in) = a ubiquinol + NAD(+) + 4 H(+)(out). Functionally, core subunit of the mitochondrial membrane respiratory chain NADH dehydrogenase (Complex I) which catalyzes electron transfer from NADH through the respiratory chain, using ubiquinone as an electron acceptor. Part of the enzyme membrane arm which is embedded in the lipid bilayer and involved in proton translocation. The polypeptide is NADH-ubiquinone oxidoreductase chain 4L (MT-ND4L) (Kogia breviceps (Pygmy sperm whale)).